The sequence spans 959 residues: Isoleucine--tRNA ligase (959 aa).

The short motif at 66–76 is the 'HIGH' region element; that stretch reads PYANGDIHIGH. Glu-592 provides a ligand contact to L-isoleucyl-5'-AMP. The 'KMSKS' region signature appears at 633 to 637; it reads KMSKS. Position 636 (Lys-636) interacts with ATP. Zn(2+) contacts are provided by Cys-922, Cys-925, Cys-942, and Cys-945.

The protein belongs to the class-I aminoacyl-tRNA synthetase family. IleS type 1 subfamily. In terms of assembly, monomer. Zn(2+) serves as cofactor.

The protein resides in the cytoplasm. The enzyme catalyses tRNA(Ile) + L-isoleucine + ATP = L-isoleucyl-tRNA(Ile) + AMP + diphosphate. In terms of biological role, catalyzes the attachment of isoleucine to tRNA(Ile). As IleRS can inadvertently accommodate and process structurally similar amino acids such as valine, to avoid such errors it has two additional distinct tRNA(Ile)-dependent editing activities. One activity is designated as 'pretransfer' editing and involves the hydrolysis of activated Val-AMP. The other activity is designated 'posttransfer' editing and involves deacylation of mischarged Val-tRNA(Ile). The protein is Isoleucine--tRNA ligase of Cupriavidus metallidurans (strain ATCC 43123 / DSM 2839 / NBRC 102507 / CH34) (Ralstonia metallidurans).